Here is a 249-residue protein sequence, read N- to C-terminus: Putative adhesin RC1281 (249 aa).

The first 22 residues, 1 to 22 (MKKLLLIAAASTALLTSGLSFA), serve as a signal peptide directing secretion.

Adheres to biotinylated epithelial (Vero cell) proteins. The sequence is that of Putative adhesin RC1281 from Rickettsia conorii (strain ATCC VR-613 / Malish 7).